The sequence spans 158 residues: Complexin-3 (158 aa).

Residues 14–47 (KNLTGSLGGGEDKGDGDKSAAEAQGMSREEYEEY) form a disordered region. The segment covering 23–33 (GEDKGDGDKSA) has biased composition (basic and acidic residues). Residues 39 to 74 (MSREEYEEYQKQLVEEKMERDAQFTQRKAERATLRS) adopt a coiled-coil conformation. Cysteine methyl ester is present on Cys155. Residue Cys155 is the site of S-farnesyl cysteine attachment. Positions 156–158 (HIM) are cleaved as a propeptide — removed in mature form.

The protein belongs to the complexin/synaphin family. As to quaternary structure, binds to the SNARE core complex containing SNAP25, VAMP2 and STX1A. Farnesylation mediates presynaptic targeting. In terms of tissue distribution, present in many brain regions, including hippocampus and cerebellum (at protein level). Expressed in the retina (at protein level). Expressed in retinal amacrine cells (at protein level). Expressed in retinal photoreceptor ribbon synapses. Expressed in the retinal inner nuclear layer, at bipolar cells (at protein level). Expressed in cone photoreceptor synaptic terminals (at protein level).

Its subcellular location is the synapse. The protein resides in the cell membrane. Complexin that regulates SNARE protein complex-mediated synaptic vesicle fusion. Required for the maintenance of synaptic ultrastructure in the adult retina. Positively regulates synaptic transmission through synaptic vesicle availability and exocytosis of neurotransmitters at photoreceptor ribbon synapses in the retina. Suppresses tonic photoreceptor activity and baseline 'noise' by suppression of Ca(2+) vesicle tonic release and the facilitation of evoked synchronous and asynchronous Ca(2+) vesicle release. The protein is Complexin-3 (Cplx3) of Mus musculus (Mouse).